Consider the following 1172-residue polypeptide: Thrombospondin-2 (1172 aa).

The signal sequence occupies residues 1–18 (MVWRLVLLALWVWPSTQA). The region spanning 19–215 (GHQDKDTTFD…LQNVHLVFEN (197 aa)) is the Laminin G-like domain. A heparin-binding region spans residues 19-232 (GHQDKDTTFD…KKGCQQGQGA (214 aa)). N-linked (GlcNAc...) asparagine glycosylation is found at Asn-151, Asn-316, and Asn-330. The region spanning 318–375 (SACWQDGRFFAENETWVVDSCTTCTCKKFKTICHQITCPPATCASPSFVEGECCPSCL) is the VWFC domain. TSP type-1 domains follow at residues 381-431 (EEGW…SKCD), 437-492 (DGGW…APCP), and 494-549 (DGRW…RSCP). 27 cysteine pairs are disulfide-bonded: Cys-393–Cys-425, Cys-397–Cys-430, Cys-408–Cys-415, Cys-449–Cys-486, Cys-453–Cys-491, Cys-464–Cys-476, Cys-506–Cys-543, Cys-510–Cys-548, Cys-521–Cys-533, Cys-553–Cys-564, Cys-558–Cys-574, Cys-577–Cys-588, Cys-594–Cys-610, Cys-601–Cys-619, Cys-622–Cys-646, Cys-652–Cys-665, Cys-659–Cys-678, Cys-680–Cys-691, Cys-707–Cys-715, Cys-720–Cys-740, Cys-756–Cys-776, Cys-779–Cys-799, Cys-815–Cys-835, Cys-838–Cys-858, Cys-876–Cys-896, Cys-912–Cys-932, and Cys-948–Cys-1169. A glycan (N-linked (GlcNAc...) asparagine) is linked at Asn-457. The region spanning 549 to 589 (PVDGCLSNPCFPGAQCSSFPDGSWSCGSCPVGFLGNGTHCE) is the EGF-like 1 domain. Residue Asn-584 is glycosylated (N-linked (GlcNAc...) asparagine). Residues 648 to 692 (PENPCKDKTHNCHKHAECIYLGHFSDPMYKCECQTGYAGDGLICG) enclose the EGF-like 2 domain. TSP type-3 repeat units follow at residues 693–728 (EDSD…NSGQ), 729–764 (EDFD…NPRQ), 765–787 (ADYD…NPAQ), 788–823 (IDTD…NTDQ), 824–846 (RDTD…NPDQ), 847–884 (TDVD…NANQ), 885–920 (ADHD…NPDQ), and 921–956 (EDLD…AISE). N-linked (GlcNAc...) asparagine glycosylation occurs at Asn-710. A disordered region spans residues 843–931 (NPDQTDVDND…DLDGDGRGDI (89 aa)). Acidic residues predominate over residues 847-866 (TDVDNDLVGDQCDNNEDIDD). Polar residues predominate over residues 870–884 (QNNQDNCPYISNANQ). Positions 896 to 905 (CDPDDDNDGV) are enriched in acidic residues. Positions 928–930 (RGD) match the Cell attachment site motif. A TSP C-terminal domain is found at 960–1172 (RNFQMVPLDP…SDLKYECRDI (213 aa)). An N-linked (GlcNAc...) asparagine glycan is attached at Asn-1069.

This sequence belongs to the thrombospondin family. In terms of assembly, homotrimer; disulfide-linked. Interacts (via the TSP type I repeats) with CD36; the interaction conveys an antiangiogenic effect. Interacts (via the TSP type I repeats) with HRG; the interaction blocks the antiangiogenic effect of THBS2 with CD36. Can bind to fibrinogen, fibronectin, laminin and type V collagen. In terms of tissue distribution, high expression in invertebral disk tissue.

Its function is as follows. Adhesive glycoprotein that mediates cell-to-cell and cell-to-matrix interactions. Ligand for CD36 mediating antiangiogenic properties. This chain is Thrombospondin-2 (THBS2), found in Homo sapiens (Human).